The following is a 60-amino-acid chain: Large ribosomal subunit protein uL30 (60 aa).

The protein belongs to the universal ribosomal protein uL30 family. As to quaternary structure, part of the 50S ribosomal subunit.

This Paracidovorax citrulli (strain AAC00-1) (Acidovorax citrulli) protein is Large ribosomal subunit protein uL30.